The primary structure comprises 501 residues: MAGGGGGSTSGEGPRELDQTPTWAVSTVCGVIILISIVLELMIHKIGEVFTERRKKALYEALQKIKNELMVLGFISLLLTFGQNYIASLCVASRYGHAMSFCGPYDGPSGESKKPKTTEHLERRVLADAAPAQCKKGYVPLISLNALHQVHIFIFFLAVFHVIYSAITMMLGRAKIRGWKVWEEEVINDHEMMNDPSRFRLTHETSFVREHVNPWAKNRFSFYVMCFFRQMLRSVRKSDYLTMRHGFISVHLAPGMKFNFQKYIKRSLEDDFKVVVGISPELWAFVMLFLLFDVHGWYVTAVITMIPPLLTLAIGTKLQAIISDMALEIQERHAVIQGMPLVNVSDRHFWFSRPALVLHIIHFILFQNAFEITYFFWIWYEFGLRSCFHHHFALIIIRVALGVGVQFLCSYITLPLYALVTQMGSTMKRSVFDDQTSKALKNWHKNAKKKSETPGQTQPPLPNLRPKTGGDIESASPANITASVDVKESDQSQSRDLLSGP.

The Extracellular portion of the chain corresponds to 1–22 (MAGGGGGSTSGEGPRELDQTPT). The helical transmembrane segment at 23–43 (WAVSTVCGVIILISIVLELMI) threads the bilayer. Residues 44 to 68 (HKIGEVFTERRKKALYEALQKIKNE) are Cytoplasmic-facing. The chain crosses the membrane as a helical span at residues 69 to 89 (LMVLGFISLLLTFGQNYIASL). The Extracellular portion of the chain corresponds to 90–151 (CVASRYGHAM…ISLNALHQVH (62 aa)). Residues 152–172 (IFIFFLAVFHVIYSAITMMLG) form a helical membrane-spanning segment. The Cytoplasmic portion of the chain corresponds to 173–273 (RAKIRGWKVW…IKRSLEDDFK (101 aa)). A helical membrane pass occupies residues 274 to 294 (VVVGISPELWAFVMLFLLFDV). Position 295 (His295) is a topological domain, extracellular. Residues 296–316 (GWYVTAVITMIPPLLTLAIGT) form a helical membrane-spanning segment. At 317–359 (KLQAIISDMALEIQERHAVIQGMPLVNVSDRHFWFSRPALVLH) the chain is on the cytoplasmic side. The chain crosses the membrane as a helical span at residues 360–380 (IIHFILFQNAFEITYFFWIWY). The Extracellular portion of the chain corresponds to 381–391 (EFGLRSCFHHH). A helical membrane pass occupies residues 392–412 (FALIIIRVALGVGVQFLCSYI). Residues 413-501 (TLPLYALVTQ…SQSRDLLSGP (89 aa)) lie on the Cytoplasmic side of the membrane. The segment at 443–501 (WHKNAKKKSETPGQTQPPLPNLRPKTGGDIESASPANITASVDVKESDQSQSRDLLSGP) is disordered. The interval 450–471 (KSETPGQTQPPLPNLRPKTGGD) is calmodulin-binding. The segment covering 491-501 (QSQSRDLLSGP) has biased composition (polar residues).

The protein belongs to the MLO family.

Its subcellular location is the membrane. Functionally, may be involved in modulation of pathogen defense and leaf cell death. Activity seems to be regulated by Ca(2+)-dependent calmodulin binding and seems not to require heterotrimeric G proteins. This is MLO-like protein 5 (MLO5) from Arabidopsis thaliana (Mouse-ear cress).